The following is a 347-amino-acid chain: NADH-ubiquinone oxidoreductase chain 2 (347 aa).

Helical transmembrane passes span L2–F22, S26–A46, Y60–W80, I94–F114, T127–A147, N151–L171, I179–F197, I201–L223, M242–N262, N274–T294, and L325–I345.

It belongs to the complex I subunit 2 family.

It localises to the mitochondrion inner membrane. It catalyses the reaction a ubiquinone + NADH + 5 H(+)(in) = a ubiquinol + NAD(+) + 4 H(+)(out). Its function is as follows. Core subunit of the mitochondrial membrane respiratory chain NADH dehydrogenase (Complex I) that is believed to belong to the minimal assembly required for catalysis. Complex I functions in the transfer of electrons from NADH to the respiratory chain. The immediate electron acceptor for the enzyme is believed to be ubiquinone. The sequence is that of NADH-ubiquinone oxidoreductase chain 2 (MT-ND2) from Lampetra fluviatilis (European river lamprey).